Reading from the N-terminus, the 241-residue chain is Triosephosphate isomerase (241 aa).

Residue 9–11 (NWK) coordinates substrate. The Electrophile role is filled by H96. The active-site Proton acceptor is E165. Residues G171, S204, and 225–226 (GG) contribute to the substrate site.

This sequence belongs to the triosephosphate isomerase family. As to quaternary structure, homodimer.

It is found in the cytoplasm. It catalyses the reaction D-glyceraldehyde 3-phosphate = dihydroxyacetone phosphate. Its pathway is carbohydrate biosynthesis; gluconeogenesis. It participates in carbohydrate degradation; glycolysis; D-glyceraldehyde 3-phosphate from glycerone phosphate: step 1/1. Its function is as follows. Involved in the gluconeogenesis. Catalyzes stereospecifically the conversion of dihydroxyacetone phosphate (DHAP) to D-glyceraldehyde-3-phosphate (G3P). This Prochlorococcus marinus (strain MIT 9312) protein is Triosephosphate isomerase.